The following is a 297-amino-acid chain: N-acetylmuramic acid 6-phosphate etherase (297 aa).

One can recognise an SIS domain in the interval Ala-55–Lys-218. Residue Glu-83 is the Proton donor of the active site. Residue Glu-114 is part of the active site.

The protein belongs to the GCKR-like family. MurNAc-6-P etherase subfamily. As to quaternary structure, homodimer.

It carries out the reaction N-acetyl-D-muramate 6-phosphate + H2O = N-acetyl-D-glucosamine 6-phosphate + (R)-lactate. Its pathway is amino-sugar metabolism; 1,6-anhydro-N-acetylmuramate degradation. The protein operates within amino-sugar metabolism; N-acetylmuramate degradation. It functions in the pathway cell wall biogenesis; peptidoglycan recycling. In terms of biological role, specifically catalyzes the cleavage of the D-lactyl ether substituent of MurNAc 6-phosphate, producing GlcNAc 6-phosphate and D-lactate. Together with AnmK, is also required for the utilization of anhydro-N-acetylmuramic acid (anhMurNAc) either imported from the medium or derived from its own cell wall murein, and thus plays a role in cell wall recycling. This is N-acetylmuramic acid 6-phosphate etherase from Salmonella paratyphi A (strain ATCC 9150 / SARB42).